The primary structure comprises 157 residues: Tripartite terminase subunit 2 (157 aa).

Positions 1 to 69 (MSWAKQRVPF…DGEDGHALPD (69 aa)) are disordered. A compositionally biased stretch (acidic residues) spans 11 to 27 (LDDDDGEEENDVQDDVD).

This sequence belongs to the herpesviridae TRM2 protein family. In terms of assembly, associates with TRM1 and TRM3 to form the tripartite terminase complex.

It is found in the host nucleus. Component of the molecular motor that translocates viral genomic DNA in empty capsid during DNA packaging. Forms a tripartite terminase complex together with TRM1 and TRM3 in the host cytoplasm. Once the complex reaches the host nucleus, it interacts with the capsid portal vertex. This portal forms a ring in which genomic DNA is translocated into the capsid. This is Tripartite terminase subunit 2 from Homo sapiens (Human).